The sequence spans 1321 residues: Indole-3-acetaldehyde oxidase (1321 aa).

In terms of domain architecture, 2Fe-2S ferredoxin-type spans 1 to 90 (MSLVFAINGQ…HCNITTSEGL (90 aa)). [2Fe-2S] cluster is bound by residues C42, C47, and C50. Residues 215–404 (VDSGMYRWCS…LSIEIPFWHS (190 aa)) enclose the FAD-binding PCMH-type domain.

The protein belongs to the xanthine dehydrogenase family. In terms of assembly, aldehyde oxidases (AO) are homodimers and heterodimers of AO subunits. AO-beta is a AAO1-AAO2 heterodimer; AO-gamma is a AAO2 homodimer. AAO2 also forms a dimer with AAO3. The cofactor is [2Fe-2S] cluster. FAD serves as cofactor. Mo-molybdopterin is required as a cofactor. Weakly expressed in roots, leaves and seedlings. In seedlings, mostly expressed in lower part of hypocotyls. Detectable in seeds and mature siliques at low levels.

The protein resides in the cytoplasm. It catalyses the reaction indole-3-acetaldehyde + O2 + H2O = (indol-3-yl)acetate + H2O2 + H(+). With respect to regulation, strongly inhibited by iodoacetate, potassium cyanide (KCN), 2-mercaptoethanol, dithiothreitol (DTT), p-chloromercuribenzoate, menadione and estradiol. Weakly inhibited by 4'-(9-acridinylamino)methanesulfon-m-anisidine (mAMSA) and tritonX-100. Not affected by allopurinol. Its function is as follows. In higher plant aldehyde oxidases (AO) appear to be homo- and heterodimeric assemblies of AO subunits with probably different physiological functions. In vitro, AO-gamma uses heptaldehyde, benzaldehyde, naphthaldehyde and cinnamaldehyde as substrates; AO-beta uses indole-3-acetaldehyde (IAAld), indole-3-aldehyde (IAld) and naphtaldehyde; the AAO2-AAO3 dimer uses abscisic aldehyde. The sequence is that of Indole-3-acetaldehyde oxidase (AAO2) from Arabidopsis thaliana (Mouse-ear cress).